The primary structure comprises 376 residues: Enoyl-[acyl-carrier-protein] reductase, mitochondrial (376 aa).

Tyr72 (proton donor) is an active-site residue. NADP(+) is bound by residues Asn154, 182 to 185 (TSAV), 205 to 207 (RDR), 280 to 283 (YGGM), 305 to 307 (YWI), and Lys369.

This sequence belongs to the zinc-containing alcohol dehydrogenase family. Quinone oxidoreductase subfamily. In terms of assembly, homodimer.

It localises to the mitochondrion matrix. It catalyses the reaction a 2,3-saturated acyl-[ACP] + NADP(+) = a (2E)-enoyl-[ACP] + NADPH + H(+). In terms of biological role, catalyzes the NADPH-dependent reduction of trans-2-enoyl thioesters in mitochondrial fatty acid synthesis (fatty acid synthesis type II). Fatty acid chain elongation in mitochondria uses acyl carrier protein (ACP) as an acyl group carrier, but the enzyme accepts both ACP and CoA thioesters as substrates in vitro. Required for respiration and the maintenance of the mitochondrial compartment. The polypeptide is Enoyl-[acyl-carrier-protein] reductase, mitochondrial (ETR1) (Eremothecium gossypii (strain ATCC 10895 / CBS 109.51 / FGSC 9923 / NRRL Y-1056) (Yeast)).